The chain runs to 367 residues: Pyrimidine monooxygenase RutA (367 aa).

FMN contacts are provided by residues 49 to 50, Asn115, Glu124, 140 to 141, and Ser190; these read IK and RY.

The protein belongs to the NtaA/SnaA/DszA monooxygenase family. RutA subfamily.

It catalyses the reaction uracil + FMNH2 + NADH + O2 = (Z)-3-ureidoacrylate + FMN + NAD(+) + H2O + H(+). It carries out the reaction thymine + FMNH2 + NADH + O2 = (Z)-2-methylureidoacrylate + FMN + NAD(+) + H2O + H(+). Its function is as follows. Catalyzes the pyrimidine ring opening between N-3 and C-4 by an unusual flavin hydroperoxide-catalyzed mechanism, adding oxygen atoms in the process to yield ureidoacrylate peracid, that immediately reacts with FMN forming ureidoacrylate and FMN-N(5)-oxide. The FMN-N(5)-oxide reacts spontaneously with NADH to produce FMN. Requires the flavin reductase RutF to regenerate FMN in vivo. This chain is Pyrimidine monooxygenase RutA, found in Yersinia enterocolitica serotype O:8 / biotype 1B (strain NCTC 13174 / 8081).